The following is a 371-amino-acid chain: MIENPIKRRPTRKIRVGSVYVGGDAPISVQSMTNTETCDVDATVAQIERCVDAGADIMRVSVPSMEAAEAFGAIRKRVSVPLVADIHFDHRIALAVADYGADCLRINPGNIGSDQKVREVVAAARHHGISMRIGVNAGSLEKDLQKKYGEPTGQALLESALRHIDILDRLDFHEFKVSVKASNVFLTMDAYRLLSQQIDNPLHLGVTEAGIYRTGTVKSAIALGGLLMEGIGDTMRISLAAEPEDEIKIGFDILKSLGLRSNGINFIACPSCSRQEFNVIQVMQALEERLEDIRTPMDVSVIGCKVNGPGEAKEADIGVVGAAPRSLVYRNGEKSHLIDTNQLVDEIETMVRQRVQELEEAKSKEIIRSSS.

[4Fe-4S] cluster is bound by residues Cys-269, Cys-272, Cys-304, and Glu-311.

It belongs to the IspG family. Requires [4Fe-4S] cluster as cofactor.

The enzyme catalyses (2E)-4-hydroxy-3-methylbut-2-enyl diphosphate + oxidized [flavodoxin] + H2O + 2 H(+) = 2-C-methyl-D-erythritol 2,4-cyclic diphosphate + reduced [flavodoxin]. It participates in isoprenoid biosynthesis; isopentenyl diphosphate biosynthesis via DXP pathway; isopentenyl diphosphate from 1-deoxy-D-xylulose 5-phosphate: step 5/6. In terms of biological role, converts 2C-methyl-D-erythritol 2,4-cyclodiphosphate (ME-2,4cPP) into 1-hydroxy-2-methyl-2-(E)-butenyl 4-diphosphate. This chain is 4-hydroxy-3-methylbut-2-en-1-yl diphosphate synthase (flavodoxin), found in Acinetobacter baumannii (strain AB307-0294).